Reading from the N-terminus, the 448-residue chain is Glutamyl-tRNA reductase (448 aa).

Substrate is bound by residues 49 to 52 (TCNR), Ser109, 114 to 116 (ETQ), and Gln120. Cys50 acts as the Nucleophile in catalysis. 189-194 (GAGEMG) contributes to the NADP(+) binding site.

Belongs to the glutamyl-tRNA reductase family. In terms of assembly, homodimer.

It carries out the reaction (S)-4-amino-5-oxopentanoate + tRNA(Glu) + NADP(+) = L-glutamyl-tRNA(Glu) + NADPH + H(+). It functions in the pathway porphyrin-containing compound metabolism; protoporphyrin-IX biosynthesis; 5-aminolevulinate from L-glutamyl-tRNA(Glu): step 1/2. Catalyzes the NADPH-dependent reduction of glutamyl-tRNA(Glu) to glutamate 1-semialdehyde (GSA). The protein is Glutamyl-tRNA reductase of Staphylococcus epidermidis (strain ATCC 35984 / DSM 28319 / BCRC 17069 / CCUG 31568 / BM 3577 / RP62A).